Reading from the N-terminus, the 501-residue chain is Probable cytosol aminopeptidase (501 aa).

Positions 272 and 277 each coordinate Mn(2+). Lysine 284 is an active-site residue. Positions 295, 354, and 356 each coordinate Mn(2+). The active site involves arginine 358.

Belongs to the peptidase M17 family. It depends on Mn(2+) as a cofactor.

Its subcellular location is the cytoplasm. It catalyses the reaction Release of an N-terminal amino acid, Xaa-|-Yaa-, in which Xaa is preferably Leu, but may be other amino acids including Pro although not Arg or Lys, and Yaa may be Pro. Amino acid amides and methyl esters are also readily hydrolyzed, but rates on arylamides are exceedingly low.. It carries out the reaction Release of an N-terminal amino acid, preferentially leucine, but not glutamic or aspartic acids.. Functionally, presumably involved in the processing and regular turnover of intracellular proteins. Catalyzes the removal of unsubstituted N-terminal amino acids from various peptides. The polypeptide is Probable cytosol aminopeptidase (Buchnera aphidicola subsp. Baizongia pistaciae (strain Bp)).